Reading from the N-terminus, the 103-residue chain is Large ribosomal subunit protein bL21 (103 aa).

The protein belongs to the bacterial ribosomal protein bL21 family. As to quaternary structure, part of the 50S ribosomal subunit. Contacts protein L20.

This protein binds to 23S rRNA in the presence of protein L20. This chain is Large ribosomal subunit protein bL21, found in Glaesserella parasuis serovar 5 (strain SH0165) (Haemophilus parasuis).